The chain runs to 230 residues: Protein-L-isoaspartate O-methyltransferase 1 (230 aa).

S65 is an active-site residue.

This sequence belongs to the methyltransferase superfamily. L-isoaspartyl/D-aspartyl protein methyltransferase family. Monomer. Expressed in roots, rosette leaves, stems, cauline leaves, flowers and developing seeds.

The protein localises to the cytoplasm. It carries out the reaction [protein]-L-isoaspartate + S-adenosyl-L-methionine = [protein]-L-isoaspartate alpha-methyl ester + S-adenosyl-L-homocysteine. In terms of biological role, catalyzes the methyl esterification of L-isoaspartyl residues in peptides and proteins that result from spontaneous decomposition of normal L-aspartyl and L-asparaginyl residues. It plays a role in the repair and/or degradation of damaged proteins. Contributes to seed longevity and germination vigor by limiting the abnormal accumulation of the L-isoaspartyl residues in seed proteins. This chain is Protein-L-isoaspartate O-methyltransferase 1 (PIMT1), found in Arabidopsis thaliana (Mouse-ear cress).